The primary structure comprises 1077 residues: MKDIGEQLYTTQVNGGPSSLTMSPKQPNRATRTERQEAQTLLYQGSEAEAATMTIATCVQCKSVHKIPTQDLRKGPGQSQDTYVCFKCSLRAVPTQLHFVNNNAGAAHVRNETETISSPVNKFKVRNFKPGKYYCDKCRFSTKDPLQYRKHTLQHEEIRFICSHCSYISYTKGEFQRHLVKHTGIFPYRCEYCDYGAIRNDYIVKHRRRVHERAGAKRPFKTVAKLEPKRTSIPKQSMELSKGPSPRAAFQNKLSDQLSRFSLHANKDKTHNLMLLPELKKYQKDVVCIPNKVTLSEPREVSLLGNKNVEVEVLSPSKEPVHPGMPLTVMAPSELVVPTNCLAQLMDVKVVNGAQQLVLKLFPLEENARLETSRGDGGTSECLSTEKGSGGQKKMLSPEASRSLAVEGNAGDFVGLDRLHSLVQKQLKNVKWVKSCNFFMPNSGVHSQQESFLGSDTIKELQKSHSLCPPRALPSAAIKSHSPASVQNSVPYGPGATVSHFLSKAAVAFADDRRGARSNSQQLLPLASLPSKVPFSGEKGLLPIGESDLEARNRISRPETLVSSDRKLEDKQMESKAVGNTGQVSSVQNKEYLHINITGEDKPRSQQPGDQPGQPKTSETAGATFEGPIISSVFSLSSGSENVPEAIKWNSSTTKIKSIELLRRKIAQLIESCGKPSSLSANSAQRRSIGQAPKLTSKATPKAIQEMSVSLTGPGPTPGPSVGPLQKPPNEDSITGSRQLVPQQVCPQFISANDGKMENRVTRKTPVATPVLIPKGAVLRVLNSSEDAHIIEATCDTPVSIPCSEAQLAGTLPFCPMKQTGSGSQPLTCRSGPADMSPGLETSLRPKSRKEDTICSATAKKMVPVYSTAPGSSDSIRQGRPVSRNLTVSKNKTKQVNSTKKKNKMQANPGRYFKDPPSFFQVARQLRLIAAKPDQLIKCPRRNQPVIVLNHPDVDSPEVTNVMKVINKYKGNVLKVVLSERTRCQLGVRRYHMRLTYQNVAETNHMKRQMMLKMKLKKVHKNNYQVVGSMPDDPAQCVFKCWFCGRLYEDQEEWMSHGQRHLIEATRDWDVLSSKGK.

Over residues 9-30 the composition is skewed to polar residues; that stretch reads YTTQVNGGPSSLTMSPKQPNRA. The disordered stretch occupies residues 9-35; the sequence is YTTQVNGGPSSLTMSPKQPNRATRTER. 2 C2H2-type zinc fingers span residues 160 to 182 and 188 to 211; these read FICSHCSYISYTKGEFQRHLVKH and YRCEYCDYGAIRNDYIVKHRRRVH. A disordered region spans residues 372–397; that stretch reads TSRGDGGTSECLSTEKGSGGQKKMLS. Lysine 479 participates in a covalent cross-link: Glycyl lysine isopeptide (Lys-Gly) (interchain with G-Cter in SUMO2). Disordered stretches follow at residues 561 to 585, 599 to 622, 675 to 739, and 825 to 852; these read LVSSDRKLEDKQMESKAVGNTGQVS, GEDKPRSQQPGDQPGQPKTSETAG, KPSS…GSRQ, and QPLTCRSGPADMSPGLETSLRPKSRKED. The segment covering 564–574 has biased composition (basic and acidic residues); it reads SDRKLEDKQME. Polar residues-rich tracts occupy residues 605–621 and 675–688; these read SQQPGDQPGQPKTSETA and KPSSLSANSAQRRS. Glycyl lysine isopeptide (Lys-Gly) (interchain with G-Cter in SUMO2) cross-links involve residues lysine 847 and lysine 861. Positions 895–914 are disordered; that stretch reads QVNSTKKKNKMQANPGRYFK. A C2H2-type 3 zinc finger spans residues 1039–1061; sequence FKCWFCGRLYEDQEEWMSHGQRH.

It belongs to the krueppel C2H2-type zinc-finger protein family.

It is found in the nucleus. Its function is as follows. Through its association with the EHMT1-EHMT2/G9A and PRC2/EED-EZH2 histone methyltransferase complexes may function in gene silencing, regulating repressive post-translational methylation of histone tails at promoters of target genes. The chain is Zinc finger protein 518B (Znf518b) from Mus musculus (Mouse).